The following is a 360-amino-acid chain: Phospho-N-acetylmuramoyl-pentapeptide-transferase (360 aa).

A run of 10 helical transmembrane segments spans residues 25 to 45, 73 to 93, 97 to 117, 132 to 152, 167 to 187, 199 to 219, 236 to 256, 263 to 283, 288 to 308, and 338 to 358; these read RGIL…PWMI, TMGG…WADL, YVWT…VDDY, WKYF…YMTA, TIEI…IVGS, GLAI…CYLS, AGEL…FLWF, VFMG…IAVI, VVLF…MIQV, and VIVR…ATLK.

Belongs to the glycosyltransferase 4 family. MraY subfamily. Mg(2+) is required as a cofactor.

The protein localises to the cell inner membrane. It catalyses the reaction UDP-N-acetyl-alpha-D-muramoyl-L-alanyl-gamma-D-glutamyl-meso-2,6-diaminopimeloyl-D-alanyl-D-alanine + di-trans,octa-cis-undecaprenyl phosphate = di-trans,octa-cis-undecaprenyl diphospho-N-acetyl-alpha-D-muramoyl-L-alanyl-D-glutamyl-meso-2,6-diaminopimeloyl-D-alanyl-D-alanine + UMP. It functions in the pathway cell wall biogenesis; peptidoglycan biosynthesis. Catalyzes the initial step of the lipid cycle reactions in the biosynthesis of the cell wall peptidoglycan: transfers peptidoglycan precursor phospho-MurNAc-pentapeptide from UDP-MurNAc-pentapeptide onto the lipid carrier undecaprenyl phosphate, yielding undecaprenyl-pyrophosphoryl-MurNAc-pentapeptide, known as lipid I. This is Phospho-N-acetylmuramoyl-pentapeptide-transferase from Azotobacter vinelandii (strain DJ / ATCC BAA-1303).